The primary structure comprises 200 residues: GTP cyclohydrolase-2 (200 aa).

50–54 (RVHSE) contributes to the GTP binding site. Zn(2+) contacts are provided by cysteine 55, cysteine 66, and cysteine 68. Residues glutamine 71, 93–95 (EGR), and threonine 115 each bind GTP. Aspartate 127 (proton acceptor) is an active-site residue. Residue arginine 129 is the Nucleophile of the active site. GTP is bound by residues threonine 150 and lysine 155.

It belongs to the GTP cyclohydrolase II family. It depends on Zn(2+) as a cofactor.

It carries out the reaction GTP + 4 H2O = 2,5-diamino-6-hydroxy-4-(5-phosphoribosylamino)-pyrimidine + formate + 2 phosphate + 3 H(+). It functions in the pathway cofactor biosynthesis; riboflavin biosynthesis; 5-amino-6-(D-ribitylamino)uracil from GTP: step 1/4. Functionally, catalyzes the conversion of GTP to 2,5-diamino-6-ribosylamino-4(3H)-pyrimidinone 5'-phosphate (DARP), formate and pyrophosphate. The sequence is that of GTP cyclohydrolase-2 from Acinetobacter baumannii (strain AB0057).